We begin with the raw amino-acid sequence, 429 residues long: Oxysterol-binding protein-like protein OBPalpha (429 aa).

This sequence belongs to the OSBP family.

The chain is Oxysterol-binding protein-like protein OBPalpha (OBPALPHA) from Candida albicans (strain SC5314 / ATCC MYA-2876) (Yeast).